The sequence spans 119 residues: FAD-linked sulfhydryl oxidase (119 aa).

The region spanning 1–97 is the ERV/ALR sulfhydryl oxidase domain; sequence MLHWGPKYWR…ISWSEYKNIY (97 aa). Cysteines 44 and 47 form a disulfide.

The protein belongs to the asfivirus B119L family. Interacts with A151R. The cofactor is FAD.

The protein resides in the host cytoplasm. Its subcellular location is the virion. The catalysed reaction is 2 R'C(R)SH + O2 = R'C(R)S-S(R)CR' + H2O2. Functionally, FAD-dependent sulfhydryl oxidase that catalyzes the formation of disulfide bonds in viral proteins produced in the cell cytoplasm. Involved in virion maturation. This African swine fever virus (isolate Warthog/Namibia/Wart80/1980) (ASFV) protein is FAD-linked sulfhydryl oxidase.